Consider the following 346-residue polypeptide: Putative cytochrome bd menaquinol oxidase subunit II (346 aa).

Transmembrane regions (helical) follow at residues 7-27 (ALIA…MATM), 63-83 (VFIV…TFVL), 87-107 (LLIP…FLVF), 119-139 (YISG…LPVT), 164-184 (AYSF…LLLA), 201-221 (KSAL…MVTM), 236-256 (FSWI…LFLP), 269-289 (LALV…GRAH), and 312-332 (ALFA…FFFW).

This sequence belongs to the cytochrome ubiquinol oxidase subunit 2 family.

It localises to the cell membrane. Its function is as follows. May have a role in sporulation. Can compensate for the loss of cytochrome aa3. The polypeptide is Putative cytochrome bd menaquinol oxidase subunit II (ythB) (Bacillus subtilis (strain 168)).